The following is a 115-amino-acid chain: T cell receptor beta variable 11-2 (115 aa).

A signal peptide spans 1-21 (MGTRLLCWAALCLLGAELTEA). Residues 22 to 115 (GVAQSPRYKI…SAVYLCASSL (94 aa)) form the Ig-like domain. A disulfide bond links C42 and C111.

As to quaternary structure, alpha-beta TR is a heterodimer composed of an alpha and beta chain; disulfide-linked. The alpha-beta TR is associated with the transmembrane signaling CD3 coreceptor proteins to form the TR-CD3 (TcR or TCR). The assembly of alpha-beta TR heterodimers with CD3 occurs in the endoplasmic reticulum where a single alpha-beta TR heterodimer associates with one CD3D-CD3E heterodimer, one CD3G-CD3E heterodimer and one CD247 homodimer forming a stable octameric structure. CD3D-CD3E and CD3G-CD3E heterodimers preferentially associate with TR alpha and TR beta chains, respectively. The association of the CD247 homodimer is the last step of TcR assembly in the endoplasmic reticulum and is required for transport to the cell surface.

Its subcellular location is the cell membrane. In terms of biological role, v region of the variable domain of T cell receptor (TR) beta chain that participates in the antigen recognition. Alpha-beta T cell receptors are antigen specific receptors which are essential to the immune response and are present on the cell surface of T lymphocytes. Recognize peptide-major histocompatibility (MH) (pMH) complexes that are displayed by antigen presenting cells (APC), a prerequisite for efficient T cell adaptive immunity against pathogens. Binding of alpha-beta TR to pMH complex initiates TR-CD3 clustering on the cell surface and intracellular activation of LCK that phosphorylates the ITAM motifs of CD3G, CD3D, CD3E and CD247 enabling the recruitment of ZAP70. In turn ZAP70 phosphorylates LAT, which recruits numerous signaling molecules to form the LAT signalosome. The LAT signalosome propagates signal branching to three major signaling pathways, the calcium, the mitogen-activated protein kinase (MAPK) kinase and the nuclear factor NF-kappa-B (NF-kB) pathways, leading to the mobilization of transcription factors that are critical for gene expression and essential for T cell growth and differentiation. The T cell repertoire is generated in the thymus, by V-(D)-J rearrangement. This repertoire is then shaped by intrathymic selection events to generate a peripheral T cell pool of self-MH restricted, non-autoaggressive T cells. Post-thymic interaction of alpha-beta TR with the pMH complexes shapes TR structural and functional avidity. The protein is T cell receptor beta variable 11-2 of Homo sapiens (Human).